Here is a 2150-residue protein sequence, read N- to C-terminus: Genome polyprotein (2150 aa).

A lipid anchor (N-myristoyl glycine; by host) is attached at glycine 2. Residues 2-1463 are Cytoplasmic-facing; the sequence is GAQVSRQNVG…ELNLANTIIT (1462 aa). The segment at 565 to 581 is amphipathic alpha-helix; sequence IAQNPVENYIDEVLNEV. A disordered region spans residues 592–611; it reads PTTSNSAPALDAAETGHTSS. Catalysis depends on for protease 2A activity residues histidine 868 and aspartate 885. Residues cysteine 902 and cysteine 904 each coordinate Zn(2+). Cysteine 956 functions as the For protease 2A activity in the catalytic mechanism. Zn(2+) is bound by residues cysteine 962 and histidine 964. Positions 1088-1157 are membrane-binding; sequence SDSWLKKFTE…SLRVADMKTQ (70 aa). The interval 1088–1221 is oligomerization; that stretch reads SDSWLKKFTE…PPGAGKSITT (134 aa). The interval 1109 to 1113 is RNA-binding; it reads GNKIS. The region spanning 1181 to 1343 is the SF3 helicase domain; sequence EAKRIKTLYI…FKDPQGKLNV (163 aa). The Zn(2+) site is built by cysteine 1350, cysteine 1361, and cysteine 1366. Residues 1350-1366 form a C4-type; degenerate zinc finger; it reads CDVDNRIGNARCCPFVC. Positions 1393–1400 are RNA-binding; the sequence is EDRRRRQV. An oligomerization region spans residues 1404-1409; the sequence is MTAIFQ. The stretch at 1464–1479 is an intramembrane region; it reads IIANVIGMARIIYVIY. Residues 1480-2150 are Cytoplasmic-facing; it reads KLFCTLQGPY…LLLHEWYEKF (671 aa). At tyrosine 1489 the chain carries O-(5'-phospho-RNA)-tyrosine. The Peptidase C3 domain maps to 1508 to 1686; it reads GPEEEFGMSL…FSAMLLRSYF (179 aa). Residues histidine 1547, glutamate 1578, and cysteine 1654 each act as for protease 3C activity in the active site. The region spanning 1918-2031 is the RdRp catalytic domain; it reads KCIMAFDYTN…SYIHELDMEA (114 aa). Mg(2+) contacts are provided by aspartate 1924 and aspartate 2017.

The protein belongs to the picornaviruses polyprotein family. As to quaternary structure, interacts with capsid protein VP1 and capsid protein VP3 to form heterotrimeric protomers. Interacts with capsid protein VP0, and capsid protein VP3 to form heterotrimeric protomers. Five protomers subsequently associate to form pentamers which serve as building blocks for the capsid. Interacts with capsid protein VP2, capsid protein VP3 and capsid protein VP4 following cleavage of capsid protein VP0. In terms of assembly, interacts with capsid protein VP1 and capsid protein VP3 in the mature capsid. As to quaternary structure, interacts with capsid protein VP0 and capsid protein VP1 to form heterotrimeric protomers. Five protomers subsequently associate to form pentamers which serve as building blocks for the capsid. Interacts with capsid protein VP4 in the mature capsid. Interacts with protein 2C; this interaction may be important for virion morphogenesis. Interacts with capsid protein VP1 and capsid protein VP3. In terms of assembly, homodimer. As to quaternary structure, homohexamer; forms a hexameric ring structure with 6-fold symmetry characteristic of AAA+ ATPases. Interacts (via N-terminus) with host RTN3 (via reticulon domain); this interaction is important for viral replication. Interacts with capsid protein VP3; this interaction may be important for virion morphogenesis. Interacts with protein 3CD. In terms of assembly, homodimer. Interacts with host GBF1. Interacts (via GOLD domain) with host ACBD3 (via GOLD domain); this interaction allows the formation of a viral protein 3A/ACBD3 heterotetramer with a 2:2 stoichiometry, which will stimulate the recruitment of host PI4KB in order to synthesize PI4P at the viral RNA replication sites. As to quaternary structure, interacts with RNA-directed RNA polymerase. Interacts with protein 3AB and with RNA-directed RNA polymerase. In terms of assembly, interacts with Viral protein genome-linked and with protein 3CD. Mg(2+) serves as cofactor. Specific enzymatic cleavages in vivo by the viral proteases yield processing intermediates and the mature proteins. In terms of processing, myristoylation is required for the formation of pentamers during virus assembly. Further assembly of 12 pentamers and a molecule of genomic RNA generates the provirion. Post-translationally, during virion maturation, immature virions are rendered infectious following cleavage of VP0 into VP4 and VP2. This maturation seems to be an autocatalytic event triggered by the presence of RNA in the capsid and it is followed by a conformational change infectious virion. Myristoylation is required during RNA encapsidation and formation of the mature virus particle. In terms of processing, VPg is uridylylated by the polymerase into VPg-pUpU. This acts as a nucleotide-peptide primer for the genomic RNA replication.

It localises to the virion. The protein resides in the host cytoplasm. The protein localises to the host cytoplasmic vesicle membrane. It is found in the host nucleus. The catalysed reaction is a ribonucleoside 5'-triphosphate + H2O = a ribonucleoside 5'-diphosphate + phosphate + H(+). It catalyses the reaction Selective cleavage of Tyr-|-Gly bond in the picornavirus polyprotein.. It carries out the reaction RNA(n) + a ribonucleoside 5'-triphosphate = RNA(n+1) + diphosphate. The enzyme catalyses Selective cleavage of Gln-|-Gly bond in the poliovirus polyprotein. In other picornavirus reactions Glu may be substituted for Gln, and Ser or Thr for Gly.. Its activity is regulated as follows. Replication or transcription is subject to high level of random mutations by the nucleotide analog ribavirin. Functionally, forms an icosahedral capsid of pseudo T=3 symmetry with capsid proteins VP2 and VP3. The capsid is 300 Angstroms in diameter, composed of 60 copies of each capsid protein and enclosing the viral positive strand RNA genome. Capsid protein VP1 mainly forms the vertices of the capsid. Capsid protein VP1 interacts with host cell receptor to provide virion attachment to target host cells. This attachment induces virion internalization. Tyrosine kinases are probably involved in the entry process. After binding to its receptor, the capsid undergoes conformational changes. Capsid protein VP1 N-terminus (that contains an amphipathic alpha-helix) and capsid protein VP4 are externalized. Together, they shape a pore in the host membrane through which viral genome is translocated to host cell cytoplasm. Forms an icosahedral capsid of pseudo T=3 symmetry with capsid proteins VP2 and VP3. The capsid is 300 Angstroms in diameter, composed of 60 copies of each capsid protein and enclosing the viral positive strand RNA genome. In terms of biological role, lies on the inner surface of the capsid shell. After binding to the host receptor, the capsid undergoes conformational changes. Capsid protein VP4 is released, Capsid protein VP1 N-terminus is externalized, and together, they shape a pore in the host membrane through which the viral genome is translocated into the host cell cytoplasm. Its function is as follows. Component of immature procapsids, which is cleaved into capsid proteins VP4 and VP2 after maturation. Allows the capsid to remain inactive before the maturation step. Functionally, cysteine protease that cleaves viral polyprotein and specific host proteins. It is responsible for the autocatalytic cleavage between the P1 and P2 regions, which is the first cleavage occurring in the polyprotein. Also cleaves the host translation initiation factor EIF4G1, in order to shut down the capped cellular mRNA translation. Inhibits the host nucleus-cytoplasm protein and RNA trafficking by cleaving host members of the nuclear pores. Counteracts stress granule formation probably by antagonizing its assembly or promoting its dissassembly. Plays an essential role in the virus replication cycle by acting as a viroporin. Creates a pore in the host endoplasmic reticulum and as a consequence releases Ca2+ in the cytoplasm of infected cell. In turn, high levels of cytoplasmic calcium may trigger membrane trafficking and transport of viral ER-associated proteins to viroplasms, sites of viral genome replication. In terms of biological role, induces and associates with structural rearrangements of intracellular membranes. Displays RNA-binding, nucleotide binding and NTPase activities. May play a role in virion morphogenesis and viral RNA encapsidation by interacting with the capsid protein VP3. Its function is as follows. Localizes the viral replication complex to the surface of membranous vesicles. Together with protein 3CD binds the Cis-Active RNA Element (CRE) which is involved in RNA synthesis initiation. Acts as a cofactor to stimulate the activity of 3D polymerase, maybe through a nucleid acid chaperone activity. Functionally, localizes the viral replication complex to the surface of membranous vesicles. It inhibits host cell endoplasmic reticulum-to-Golgi apparatus transport and causes the disassembly of the Golgi complex, possibly through GBF1 interaction. This would result in depletion of MHC, trail receptors and IFN receptors at the host cell surface. Plays an essential role in viral RNA replication by recruiting ACBD3 and PI4KB at the viral replication sites, thereby allowing the formation of the rearranged membranous structures where viral replication takes place. Acts as a primer for viral RNA replication and remains covalently bound to viral genomic RNA. VPg is uridylylated prior to priming replication into VPg-pUpU. The oriI viral genomic sequence may act as a template for this. The VPg-pUpU is then used as primer on the genomic RNA poly(A) by the RNA-dependent RNA polymerase to replicate the viral genome. During genome replication, the VPg-RNA linkage is removed by the host TDP2, thereby accelerating replication. During the late stage of the replication cycle, host TDP2 is excluded from sites of viral RNA synthesis and encapsidation, allowing for the generation of progeny virions. In terms of biological role, involved in the viral replication complex and viral polypeptide maturation. It exhibits protease activity with a specificity and catalytic efficiency that is different from protease 3C. Protein 3CD lacks polymerase activity. Protein 3CD binds to the 5'UTR of the viral genome. Its function is as follows. Replicates the viral genomic RNA on the surface of intracellular membranes. May form linear arrays of subunits that propagate along a strong head-to-tail interaction called interface-I. Covalently attaches UMP to a tyrosine of VPg, which is used to prime RNA synthesis. The positive stranded RNA genome is first replicated at virus induced membranous vesicles, creating a dsRNA genomic replication form. This dsRNA is then used as template to synthesize positive stranded RNA genomes. ss(+)RNA genomes are either translated, replicated or encapsidated. Functionally, major viral protease that mediates proteolytic processing of the polyprotein. Cleaves host EIF5B, contributing to host translation shutoff. Also cleaves host PABPC1, contributing to host translation shutoff. Cleaves host NLRP1, triggers host N-glycine-mediated degradation of the autoinhibitory NLRP1 N-terminal fragment. This Homo sapiens (Human) protein is Genome polyprotein.